A 423-amino-acid polypeptide reads, in one-letter code: MASIWEETEADGLGEEVLKMSTEEIIQRTRLLDSEIKIMKSEVLRVTHELQAMRDKIKENSEKIKVNKTLPYLVSNVIELLDVDPNDQEEDGANIDLDSQRKGKCAVIKTSTRQTYFLPVIGLVDAEKLKPGDLVGVNKDSYLILETLPTEYDSRVKAMEVDERPTEQYSDIGGLDKQIQELVEAIVLPMNHKEKFENLGIQPPKGVLMYGPPGTGKTLLARACAAQTKATFLKLAGPQLVQMFIGDGAKLVRDAFALAKEKAPSIIFIDELDAIGTKRFDSEKAGDREVQRTMLELLNQLDGFQPNMQVKVIAATNRVDILDPALLRSGRLDRKIEFPMPNEEARARIMQIHSRKMNVSPDVNYEELARCTDDFNGAQCKAVCVEAGMIALRRGATELTHEDYMEGILEVQAKKKANLQYYA.

Residue 211–218 (GPPGTGKT) coordinates ATP.

This sequence belongs to the AAA ATPase family. In terms of assembly, may form a heterodimer with a related family member.

It localises to the cytoplasm. The protein resides in the nucleus. The 26S proteasome is involved in the ATP-dependent degradation of ubiquitinated proteins. The regulatory (or ATPase) complex confers ATP dependency and substrate specificity to the 26S complex. In Xenopus laevis (African clawed frog), this protein is 26S proteasome regulatory subunit 6A-A.